Consider the following 388-residue polypeptide: Succinate--CoA ligase [ADP-forming] subunit beta (388 aa).

One can recognise an ATP-grasp domain in the interval 9–244; sequence KEILRKYGVT…LDEEDPAEIE (236 aa). ATP is bound by residues Lys-46, 53 to 55, Glu-99, Ala-102, and Glu-107; that span reads GRG. 2 residues coordinate Mg(2+): Asn-199 and Asp-213. Substrate contacts are provided by residues Asn-264 and 321 to 323; that span reads GIM.

Belongs to the succinate/malate CoA ligase beta subunit family. Heterotetramer of two alpha and two beta subunits. Requires Mg(2+) as cofactor.

It catalyses the reaction succinate + ATP + CoA = succinyl-CoA + ADP + phosphate. The catalysed reaction is GTP + succinate + CoA = succinyl-CoA + GDP + phosphate. It participates in carbohydrate metabolism; tricarboxylic acid cycle; succinate from succinyl-CoA (ligase route): step 1/1. Functionally, succinyl-CoA synthetase functions in the citric acid cycle (TCA), coupling the hydrolysis of succinyl-CoA to the synthesis of either ATP or GTP and thus represents the only step of substrate-level phosphorylation in the TCA. The beta subunit provides nucleotide specificity of the enzyme and binds the substrate succinate, while the binding sites for coenzyme A and phosphate are found in the alpha subunit. In Herminiimonas arsenicoxydans, this protein is Succinate--CoA ligase [ADP-forming] subunit beta.